We begin with the raw amino-acid sequence, 115 residues long: Immunoglobulin kappa variable 5-2 (115 aa).

Positions 1-20 are cleaved as a signal peptide; the sequence is MGSQVHLLSFLLLWISDTRA. Residues 21 to 43 form a framework-1 region; it reads ETTLTQSPAFMSATPGDKVNISC. The Ig-like domain occupies 22–115; the sequence is TTLTQSPAFM…YFCLQHDNFP (94 aa). N-linked (GlcNAc...) asparagine glycosylation occurs at Asn-40. Phosphoserine is present on Ser-42. An intrachain disulfide couples Cys-43 to Cys-108. Positions 44–54 are complementarity-determining-1; it reads KASQDIDDDMN. The interval 55–69 is framework-2; sequence WYQQKPGEAAIFIIQ. Residues 70 to 76 form a complementarity-determining-2 region; that stretch reads EATTLVP. A framework-3 region spans residues 77–108; that stretch reads GIPPRFSGSGYGTDFTLTINNIESEDAAYYFC. Residues 109 to 115 form a complementarity-determining-3 region; that stretch reads LQHDNFP.

As to quaternary structure, immunoglobulins are composed of two identical heavy chains and two identical light chains; disulfide-linked.

The protein localises to the secreted. It is found in the cell membrane. In terms of biological role, v region of the variable domain of immunoglobulin light chains that participates in the antigen recognition. Immunoglobulins, also known as antibodies, are membrane-bound or secreted glycoproteins produced by B lymphocytes. In the recognition phase of humoral immunity, the membrane-bound immunoglobulins serve as receptors which, upon binding of a specific antigen, trigger the clonal expansion and differentiation of B lymphocytes into immunoglobulins-secreting plasma cells. Secreted immunoglobulins mediate the effector phase of humoral immunity, which results in the elimination of bound antigens. The antigen binding site is formed by the variable domain of one heavy chain, together with that of its associated light chain. Thus, each immunoglobulin has two antigen binding sites with remarkable affinity for a particular antigen. The variable domains are assembled by a process called V-(D)-J rearrangement and can then be subjected to somatic hypermutations which, after exposure to antigen and selection, allow affinity maturation for a particular antigen. The chain is Immunoglobulin kappa variable 5-2 from Homo sapiens (Human).